Here is a 258-residue protein sequence, read N- to C-terminus: MKQLYWYTCGEGDCDLVLLHGWGLNSGVWHCIIDRLAPHFRLHLVDLPGYGRSQDYGAMSLADMAERVAQQAPKQALWLGWSMGGLVASQIALSQPECVRGLITVSSSPCFTARDEWPGIKPEVLAGFQHQLSDDFHRTVERFLALQTLGTESSRQDARLLKSVVLQHQMPDVEVLTGGLEILRTADLRTALSGFTLPFMRVYGHLDSLVPRKVASLLDSAWPQTQSVVMQGAAHAPFISHPNDFAKLILNFAEENKK.

Positions 16–242 (LVLLHGWGLN…AAHAPFISHP (227 aa)) constitute an AB hydrolase-1 domain. Residues W22, 82–83 (SM), and 143–147 (FLALQ) contribute to the substrate site. The active-site Nucleophile is S82. Residues D207 and H235 contribute to the active site. H235 serves as a coordination point for substrate.

The protein belongs to the AB hydrolase superfamily. Carboxylesterase BioH family. In terms of assembly, monomer.

The protein localises to the cytoplasm. It catalyses the reaction 6-carboxyhexanoyl-[ACP] methyl ester + H2O = 6-carboxyhexanoyl-[ACP] + methanol + H(+). It functions in the pathway cofactor biosynthesis; biotin biosynthesis. Its function is as follows. The physiological role of BioH is to remove the methyl group introduced by BioC when the pimeloyl moiety is complete. It allows to synthesize pimeloyl-ACP via the fatty acid synthetic pathway through the hydrolysis of the ester bonds of pimeloyl-ACP esters. In Yersinia pseudotuberculosis serotype IB (strain PB1/+), this protein is Pimeloyl-[acyl-carrier protein] methyl ester esterase.